The primary structure comprises 338 residues: Phenylalanine--tRNA ligase alpha subunit (338 aa).

Glutamate 253 is a binding site for Mg(2+).

It belongs to the class-II aminoacyl-tRNA synthetase family. Phe-tRNA synthetase alpha subunit type 1 subfamily. Tetramer of two alpha and two beta subunits. Mg(2+) serves as cofactor.

It is found in the cytoplasm. The catalysed reaction is tRNA(Phe) + L-phenylalanine + ATP = L-phenylalanyl-tRNA(Phe) + AMP + diphosphate + H(+). The polypeptide is Phenylalanine--tRNA ligase alpha subunit (Geotalea daltonii (strain DSM 22248 / JCM 15807 / FRC-32) (Geobacter daltonii)).